Consider the following 311-residue polypeptide: Light-independent protochlorophyllide reductase iron-sulfur ATP-binding protein (311 aa).

ATP contacts are provided by residues 10–15 (GIGKST) and Lys-39. Position 14 (Ser-14) interacts with Mg(2+). Positions 95 and 129 each coordinate [4Fe-4S] cluster. 180–181 (NR) contributes to the ATP binding site.

The protein belongs to the NifH/BchL/ChlL family. As to quaternary structure, homodimer. Protochlorophyllide reductase is composed of three subunits; ChlL, ChlN and ChlB. [4Fe-4S] cluster serves as cofactor.

Its subcellular location is the plastid. It is found in the chloroplast. The enzyme catalyses chlorophyllide a + oxidized 2[4Fe-4S]-[ferredoxin] + 2 ADP + 2 phosphate = protochlorophyllide a + reduced 2[4Fe-4S]-[ferredoxin] + 2 ATP + 2 H2O. Its pathway is porphyrin-containing compound metabolism; chlorophyll biosynthesis (light-independent). Functionally, component of the dark-operative protochlorophyllide reductase (DPOR) that uses Mg-ATP and reduced ferredoxin to reduce ring D of protochlorophyllide (Pchlide) to form chlorophyllide a (Chlide). This reaction is light-independent. The L component serves as a unique electron donor to the NB-component of the complex, and binds Mg-ATP. The polypeptide is Light-independent protochlorophyllide reductase iron-sulfur ATP-binding protein (Oltmannsiellopsis viridis (Marine flagellate)).